Reading from the N-terminus, the 105-residue chain is Putative zinc finger protein 861 (105 aa).

The segment at 75–97 (YTCKPCGNAFRFHHSFHIHERPH) adopts a C2H2-type zinc-finger fold.

This chain is Putative zinc finger protein 861 (ZNF861P), found in Homo sapiens (Human).